A 240-amino-acid chain; its full sequence is DUP240 protein DFP1 (240 aa).

Residues 1–29 form a disordered region; it reads MQPYLKKNTHATDDPKASPLKEGSPDNPE. 2 consecutive transmembrane segments (helical) span residues 61-81 and 84-104; these read IMIN…DIWF and VLSP…VLQI.

This sequence belongs to the DUP/COS family.

Its subcellular location is the membrane. The protein is DUP240 protein DFP1 of Saccharomyces cerevisiae (Baker's yeast).